A 347-amino-acid chain; its full sequence is GTP 3',8-cyclase (347 aa).

The 233-residue stretch at 10 to 242 (RLNRPIGVLR…ERINARWPLE (233 aa)) folds into the Radical SAM core domain. Arg19 contacts GTP. Cys26 and Cys30 together coordinate [4Fe-4S] cluster. Tyr32 contributes to the S-adenosyl-L-methionine binding site. Cys33 lines the [4Fe-4S] cluster pocket. Position 65 (Arg65) interacts with GTP. Residue Gly69 participates in S-adenosyl-L-methionine binding. Position 104 (Thr104) interacts with GTP. Ser129 is a binding site for S-adenosyl-L-methionine. Residue Lys178 participates in GTP binding. An S-adenosyl-L-methionine-binding site is contributed by Met212. Residues Cys275 and Cys278 each coordinate [4Fe-4S] cluster. Residue 280–282 (RLR) participates in GTP binding. Residue Cys292 participates in [4Fe-4S] cluster binding.

It belongs to the radical SAM superfamily. MoaA family. In terms of assembly, monomer and homodimer. Requires [4Fe-4S] cluster as cofactor.

The enzyme catalyses GTP + AH2 + S-adenosyl-L-methionine = (8S)-3',8-cyclo-7,8-dihydroguanosine 5'-triphosphate + 5'-deoxyadenosine + L-methionine + A + H(+). It participates in cofactor biosynthesis; molybdopterin biosynthesis. In terms of biological role, catalyzes the cyclization of GTP to (8S)-3',8-cyclo-7,8-dihydroguanosine 5'-triphosphate. This chain is GTP 3',8-cyclase, found in Synechococcus sp. (strain CC9605).